The chain runs to 274 residues: Phosphate import ATP-binding protein PstB (274 aa).

One can recognise an ABC transporter domain in the interval 28–269 (VTVRDLNFYY…PNDRRTQDYI (242 aa)). Residue 60–67 (GPSGCGKS) coordinates ATP.

This sequence belongs to the ABC transporter superfamily. Phosphate importer (TC 3.A.1.7) family. The complex is composed of two ATP-binding proteins (PstB), two transmembrane proteins (PstC and PstA) and a solute-binding protein (PstS).

It is found in the cell inner membrane. It catalyses the reaction phosphate(out) + ATP + H2O = ADP + 2 phosphate(in) + H(+). Part of the ABC transporter complex PstSACB involved in phosphate import. Responsible for energy coupling to the transport system. This Rhodopseudomonas palustris (strain HaA2) protein is Phosphate import ATP-binding protein PstB.